A 219-amino-acid chain; its full sequence is Claudin-3 (219 aa).

The Cytoplasmic segment spans residues 1 to 8 (MSMGLEIT). A helical transmembrane segment spans residues 9 to 29 (GTSLAVLGWLCTIVCCALPMW). Residues 30-80 (RVSAFIGSSIITAQITWEGLWMNCVVQSTGQMQCKMYDSLLALPQDLQAAR) are Extracellular-facing. Residues 81 to 101 (ALIVVSILLAAFGLLVALVGA) form a helical membrane-spanning segment. Over 102–115 (QCTNCVQDETAKAK) the chain is Cytoplasmic. The helical transmembrane segment at 116 to 136 (ITIVAGVLFLLAALLTLVPVS) threads the bilayer. The Extracellular portion of the chain corresponds to 137-159 (WSANTIIRDFYNPLVPEAQKREM). Residues 160–180 (GAGLYVGWAAAALQLLGGALL) form a helical membrane-spanning segment. Topologically, residues 181-219 (CCSCPPRDKYAPTKILYSAPRSTGPGTGTGTAYDRKDYV) are cytoplasmic. Residue tyrosine 197 is modified to Phosphotyrosine. A Phosphoserine modification is found at serine 198. An interactions with TJP1, TJP2 and TJP3 region spans residues 218 to 219 (YV).

The protein belongs to the claudin family. Can form homo- and heteropolymers with other CLDN. Homopolymers interact with CLDN1 and CLDN2 homopolymers. Interacts in cis (within the same plasma membrane) with CLDN19. Directly interacts with TJP1/ZO-1, TJP2/ZO-2 and TJP3/ZO-3. As to quaternary structure, (Microbial infection) Interacts with Clostridium perfringens enterotoxin CPE; the interaction may disrupt claudin assembly in tight junctions. Expressed in the lung. Expressed at high levels in the liver and at lower levels, in kidney and testis.

It localises to the cell junction. Its subcellular location is the tight junction. It is found in the cell membrane. Functionally, plays a major role in tight junction-specific obliteration of the intercellular space, through calcium-independent cell-adhesion activity. This chain is Claudin-3 (Cldn3), found in Mus musculus (Mouse).